A 467-amino-acid chain; its full sequence is Actinorhodin polyketide putative beta-ketoacyl synthase 1 (467 aa).

The interval 1 to 35 is disordered; sequence MPLDAAPVDPASRGPVSAFEPPSSHGADDDDDHRT. In terms of domain architecture, Ketosynthase family 3 (KS3) spans 45-459; sequence KRRVVITGVG…GFQSAMVLRD (415 aa). Active-site for beta-ketoacyl synthase activity residues include C212, H352, and H389.

Belongs to the thiolase-like superfamily. Beta-ketoacyl-ACP synthases family.

The protein operates within antibiotic biosynthesis; actinorhodin biosynthesis. This is Actinorhodin polyketide putative beta-ketoacyl synthase 1 from Streptomyces coelicolor (strain ATCC BAA-471 / A3(2) / M145).